Reading from the N-terminus, the 747-residue chain is Putative ankyrin repeat protein FPV222 (747 aa).

ANK repeat units follow at residues 38-67 (DNCT…DPNI), 103-132 (NYRN…LVNM), 136-165 (KNIT…NTNA), 169-198 (YGET…NVNV), 202-231 (DSIT…DTNA), 234-263 (LERF…NTNV), 294-323 (PCTV…NPDI), 328-357 (TSTY…YTDV), 361-393 (QQNT…SFNL), 397-426 (KGRT…DTNI), 430-460 (MSFT…DPNL), 464-493 (KEVS…DIKP), 495-524 (NECY…ELEV), and 529-559 (DHYV…DLNK).

The protein is Putative ankyrin repeat protein FPV222 of Vertebrata (FPV).